Reading from the N-terminus, the 172-residue chain is Putative phosphoesterase Bcer98_0945 (172 aa).

His34 acts as the Proton donor in catalysis. 2 short sequence motifs (HXTX) span residues 34–37 (HITL) and 115–118 (HLTI). His115 functions as the Proton acceptor in the catalytic mechanism.

It belongs to the 2H phosphoesterase superfamily. YjcG family.

This Bacillus cytotoxicus (strain DSM 22905 / CIP 110041 / 391-98 / NVH 391-98) protein is Putative phosphoesterase Bcer98_0945.